Consider the following 171-residue polypeptide: MASSSSTYRSSSSSDGGNNNPSDSVVTVDERKRKRMLSNRESARRSRMRKQKHVDDLTAQINQLSNDNRQILNSLTVTSQLYMKIQAENSVLTAQMEELSTRLQSLNEIVDLVQSNGAGFGVDQIDGCGFDDRTVGIDGYYDDMNMMSNVNHWGGSVYTNQPIMANDINMY.

The segment covering 1–24 has biased composition (low complexity); it reads MASSSSTYRSSSSSDGGNNNPSDS. The interval 1–54 is disordered; sequence MASSSSTYRSSSSSDGGNNNPSDSVVTVDERKRKRMLSNRESARRSRMRKQKHV. A bZIP domain is found at 29–92; it reads DERKRKRMLS…MKIQAENSVL (64 aa). The interval 31–52 is basic motif; the sequence is RKRKRMLSNRESARRSRMRKQK. Residues 57–71 are leucine-zipper; that stretch reads LTAQINQLSNDNRQI.

As to quaternary structure, forms heterodimers with BZIP9, BZIP10, BZIP25 and BZIP63. Component of a ternary complex composed of BZIP2-BZIP63 heterodimer and KIN10.

The protein localises to the nucleus. Transcription factor that binds to specific DNA sequences in target gene promoters. BZIP2-BZIP63-KIN10 complex binds to the ETFQO promoter to up-regulate its transcription. This chain is bZIP transcription factor 2, found in Arabidopsis thaliana (Mouse-ear cress).